A 180-amino-acid polypeptide reads, in one-letter code: UPF0134 protein MPN_127 (180 aa).

The protein belongs to the UPF0134 family.

The protein is UPF0134 protein MPN_127 of Mycoplasma pneumoniae (strain ATCC 29342 / M129 / Subtype 1) (Mycoplasmoides pneumoniae).